Consider the following 295-residue polypeptide: MSSSKPSFSDYFGKLGGIPMYKKFIEQFHNVEEFEARPDDLVIVTYPKSGTTWLSEIICMIYNNGDVEKCKEDVIFNRVPYLECSTEHVMKGVKQLNEMASPRIVKSHLPVKLLPVSFWEKNCKIIYLSRNAKDVVVSYYFLILMVTAIPDPDSFQDFVEKFMDGEVPYGSWFEHTKSWWEKSKNPQVLFLFYEDMKENIRKEVMKLLEFLGRKASDELVDKIIKHTSFQEMKNNPSTNYTTLPDEVMNQKVSPFMRKGDVGDWKNHFTVALNEKFDMHYEQQMKGSTLKFRTKI.

48-53 (KSGTTW) lines the 3'-phosphoadenylyl sulfate pocket. 106-108 (KSH) is a binding site for substrate. His-108 acts as the Proton acceptor in catalysis. Positions 130, 138, and 193 each coordinate 3'-phosphoadenylyl sulfate. 2 positions are modified to phosphoserine; by PKA: Ser-216 and Ser-228. 3'-phosphoadenylyl sulfate contacts are provided by residues 227–232 (TSFQEM) and 257–259 (RKG).

The protein belongs to the sulfotransferase 1 family. As to quaternary structure, homodimer.

It localises to the cytoplasm. Its subcellular location is the cytosol. The enzyme catalyses estrone + 3'-phosphoadenylyl sulfate = estrone 3-sulfate + adenosine 3',5'-bisphosphate + H(+). The catalysed reaction is (24S)-hydroxycholesterol + 3'-phosphoadenylyl sulfate = (24S)-hydroxycholesterol 3-sulfate + adenosine 3',5'-bisphosphate + H(+). It carries out the reaction 17beta-estradiol + 3'-phosphoadenylyl sulfate = 17beta-estradiol 3-sulfate + adenosine 3',5'-bisphosphate + H(+). It catalyses the reaction 3beta-hydroxyandrost-5-en-17-one + 3'-phosphoadenylyl sulfate = dehydroepiandrosterone 3-sulfate + adenosine 3',5'-bisphosphate + H(+). The enzyme catalyses 4-ethylphenol + 3'-phosphoadenylyl sulfate = 4-ethylphenyl sulfate + adenosine 3',5'-bisphosphate + H(+). With respect to regulation, inhibited by estradiol. Sulfotransferase that utilizes 3'-phospho-5'-adenylyl sulfate (PAPS) as sulfonate donor to catalyze the sulfate conjugation of estradiol and estrone. Is a key enzyme in estrogen homeostasis, the sulfation of estrogens leads to their inactivation. Also sulfates dehydroepiandrosterone (DHEA), pregnenolone, (24S)-hydroxycholesterol and xenobiotic compounds like ethinylestradiol, equalenin, diethyl stilbesterol and 1-naphthol at significantly lower efficiency. Does not sulfonate cortisol, testosterone and dopamine. May play a role in gut microbiota-host metabolic interaction. O-sulfonates 4-ethylphenol (4-EP), a dietary tyrosine-derived metabolite produced by gut bacteria. The product 4-EPS crosses the blood-brain barrier and may negatively regulate oligodendrocyte maturation and myelination, affecting the functional connectivity of different brain regions associated with the limbic system. This is Sulfotransferase 1E1 (SULT1E1) from Bos taurus (Bovine).